The primary structure comprises 122 residues: Large ribosomal subunit protein uL14 (122 aa).

It belongs to the universal ribosomal protein uL14 family. As to quaternary structure, part of the 50S ribosomal subunit. Forms a cluster with proteins L3 and L19. In the 70S ribosome, L14 and L19 interact and together make contacts with the 16S rRNA in bridges B5 and B8.

Binds to 23S rRNA. Forms part of two intersubunit bridges in the 70S ribosome. The protein is Large ribosomal subunit protein uL14 of Dehalococcoides mccartyi (strain ATCC BAA-2100 / JCM 16839 / KCTC 5957 / BAV1).